We begin with the raw amino-acid sequence, 624 residues long: Chaperone protein HtpG (624 aa).

Residues 1–336 (MKGQETRGFQ…SNDLPLNVSR (336 aa)) form an a; substrate-binding region. The interval 337 to 552 (EILQDSSITR…NDEMSTQMAK (216 aa)) is b. The tract at residues 553–624 (LFAAAGQAVP…IRRMNQLLVS (72 aa)) is c.

It belongs to the heat shock protein 90 family. As to quaternary structure, homodimer.

Its subcellular location is the cytoplasm. Its function is as follows. Molecular chaperone. Has ATPase activity. This chain is Chaperone protein HtpG, found in Cronobacter sakazakii (strain ATCC BAA-894) (Enterobacter sakazakii).